The primary structure comprises 176 residues: ATP-dependent protease subunit HslV (176 aa).

Residue Thr5 is part of the active site. Ala161, Cys164, and Thr167 together coordinate Na(+).

This sequence belongs to the peptidase T1B family. HslV subfamily. A double ring-shaped homohexamer of HslV is capped on each side by a ring-shaped HslU homohexamer. The assembly of the HslU/HslV complex is dependent on binding of ATP.

The protein resides in the cytoplasm. It carries out the reaction ATP-dependent cleavage of peptide bonds with broad specificity.. Allosterically activated by HslU binding. Protease subunit of a proteasome-like degradation complex believed to be a general protein degrading machinery. In Desulforamulus reducens (strain ATCC BAA-1160 / DSM 100696 / MI-1) (Desulfotomaculum reducens), this protein is ATP-dependent protease subunit HslV.